The following is a 310-amino-acid chain: Membrane protein insertase YidC 2 (310 aa).

The N-terminal stretch at 1–23 (MKKTLKRILFSSLSLSMLLLLTG) is a signal peptide. The N-palmitoyl cysteine moiety is linked to residue C24. Residue C24 is the site of S-diacylglycerol cysteine attachment. 5 helical membrane-spanning segments follow: residues 33–53 (PYGV…TYFA), 58–78 (LGFG…ILPL), 135–155 (FGGI…AIFF), 180–200 (LTVI…QGVP), and 219–239 (VFMS…GGIF). The interval 266–310 (NPPKAYKANNARKDVTNSTKATESNQAIITSKKTNRNAGKQKRRG) is disordered. The span at 281–297 (TNSTKATESNQAIITSK) shows a compositional bias: polar residues. Over residues 298-310 (KTNRNAGKQKRRG) the composition is skewed to basic residues.

The protein belongs to the OXA1/ALB3/YidC family. Type 2 subfamily.

It localises to the cell membrane. In terms of biological role, required for the insertion and/or proper folding and/or complex formation of integral membrane proteins into the membrane. Involved in integration of membrane proteins that insert both dependently and independently of the Sec translocase complex, as well as at least some lipoproteins. The polypeptide is Membrane protein insertase YidC 2 (Streptococcus agalactiae serotype V (strain ATCC BAA-611 / 2603 V/R)).